The following is a 425-amino-acid chain: MQICKVFLTQVKKLLFVSLLFCLIAQTCWLALVPYQRQLSLDSYFFRRSREVSSRYDFTRRRHMNQTLKLSSNTYNDEPLNKTKGIKNQRENATLLMLVRNWELSGALRSMRSLEDRFNKNYQYDWTFLNDVPFDQEFIEATTAMASGRTQYALIPAEDWNRPSWINETLFEEALQLMEEKNILYGGSKSYRNMCRFNSGFFFRQKILDPYDFYFRVEPDVEYFCDFPYDPFKVMRQNNKKYGFVITMYEYEDTIPSLWEAVEEYLEETESADIDMESNAFGFVSNFDFIGKSFGVIDSNSGYNLCHFWTNFEIGDLNFFRSEKYIRFFEYLDSKGGFYYERWGDAPVHSIAASLLLKKDEIIHFDELGYKHMPFGTCPSAYYLRLQQRCLCDSNHPDNIDLNVISCLRRWWKDGSGKYFLKHDS.

At 1 to 13 (MQICKVFLTQVKK) the chain is on the cytoplasmic side. A helical; Signal-anchor for type II membrane protein membrane pass occupies residues 14–33 (LLFVSLLFCLIAQTCWLALV). Residues 34-89 (PYQRQLSLDSYFFRRSREVSSRYDFTRRRHMNQTLKLSSNTYNDEPLNKTKGIKNQ) are stem region. The Lumenal portion of the chain corresponds to 34–425 (PYQRQLSLDS…SGKYFLKHDS (392 aa)). 4 N-linked (GlcNAc...) asparagine glycosylation sites follow: Asn-65, Asn-81, Asn-92, and Asn-167. The tract at residues 90–425 (RENATLLMLV…SGKYFLKHDS (336 aa)) is catalytic. Glu-313 (nucleophile) is an active-site residue.

It belongs to the glycosyltransferase 15 family.

It localises to the golgi apparatus membrane. It functions in the pathway protein modification; protein glycosylation. Involved in N-linked glycosylation. Transfers an alpha-D-mannosyl residue from GDP-mannose into lipid-linked oligosaccharide, forming an alpha-(1-&gt;2)-D-mannosyl-D-mannose linkage. This chain is Probable mannosyltransferase KTR2 (KTR2), found in Saccharomyces cerevisiae (strain ATCC 204508 / S288c) (Baker's yeast).